We begin with the raw amino-acid sequence, 267 residues long: Mlc titration factor A (267 aa).

Positions 111, 148, 152, and 211 each coordinate Zn(2+).

The protein belongs to the MtfA family. Interacts with Mlc. Zn(2+) is required as a cofactor.

The protein resides in the cytoplasm. In terms of biological role, involved in the modulation of the activity of the glucose-phosphotransferase system (glucose-PTS). Interacts with the transcriptional repressor Mlc, preventing its interaction with DNA and leading to the modulation of expression of genes regulated by Mlc, including ptsG, which encodes the PTS system glucose-specific EIICB component. Shows zinc-dependent metallopeptidase activity. The chain is Mlc titration factor A from Yersinia enterocolitica serotype O:8 / biotype 1B (strain NCTC 13174 / 8081).